The sequence spans 488 residues: Bifunctional protein HldE (488 aa).

A ribokinase region spans residues 1–330 (MIDFDGLSNA…RNILPPASLA (330 aa)). 205–208 (NSKE) is an ATP binding site. The active site involves Asp-275. The interval 358–488 (FTNGCFDILH…TSLVKRAGGA (131 aa)) is cytidylyltransferase.

It in the N-terminal section; belongs to the carbohydrate kinase PfkB family. In the C-terminal section; belongs to the cytidylyltransferase family. In terms of assembly, homodimer.

It carries out the reaction D-glycero-beta-D-manno-heptose 7-phosphate + ATP = D-glycero-beta-D-manno-heptose 1,7-bisphosphate + ADP + H(+). The enzyme catalyses D-glycero-beta-D-manno-heptose 1-phosphate + ATP + H(+) = ADP-D-glycero-beta-D-manno-heptose + diphosphate. The protein operates within nucleotide-sugar biosynthesis; ADP-L-glycero-beta-D-manno-heptose biosynthesis; ADP-L-glycero-beta-D-manno-heptose from D-glycero-beta-D-manno-heptose 7-phosphate: step 1/4. It participates in nucleotide-sugar biosynthesis; ADP-L-glycero-beta-D-manno-heptose biosynthesis; ADP-L-glycero-beta-D-manno-heptose from D-glycero-beta-D-manno-heptose 7-phosphate: step 3/4. Its function is as follows. Catalyzes the phosphorylation of D-glycero-D-manno-heptose 7-phosphate at the C-1 position to selectively form D-glycero-beta-D-manno-heptose-1,7-bisphosphate. Functionally, catalyzes the ADP transfer from ATP to D-glycero-beta-D-manno-heptose 1-phosphate, yielding ADP-D-glycero-beta-D-manno-heptose. The protein is Bifunctional protein HldE of Nitrobacter winogradskyi (strain ATCC 25391 / DSM 10237 / CIP 104748 / NCIMB 11846 / Nb-255).